The following is a 145-amino-acid chain: Putative BCoR-like protein 2 (145 aa).

The segment covering methionine 1–aspartate 27 has biased composition (basic and acidic residues). Residues methionine 1–arginine 58 form a disordered region. A compositionally biased stretch (polar residues) spans valine 38 to serine 52.

This sequence belongs to the BCOR family.

This Homo sapiens (Human) protein is Putative BCoR-like protein 2 (BCORP1).